A 371-amino-acid chain; its full sequence is tRNA-specific 2-thiouridylase MnmA (371 aa).

ATP-binding positions include 13 to 20 (GMSGGVDS) and Met39. The interaction with target base in tRNA stretch occupies residues 99-101 (NPD). Cys104 serves as the catalytic Nucleophile. The cysteines at positions 104 and 200 are disulfide-linked. Residue Gly128 participates in ATP binding. The interval 150–152 (KDQ) is interaction with tRNA. The Cysteine persulfide intermediate role is filled by Cys200. The segment at 308–309 (RY) is interaction with tRNA.

Belongs to the MnmA/TRMU family.

The protein localises to the cytoplasm. It catalyses the reaction S-sulfanyl-L-cysteinyl-[protein] + uridine(34) in tRNA + AH2 + ATP = 2-thiouridine(34) in tRNA + L-cysteinyl-[protein] + A + AMP + diphosphate + H(+). Its function is as follows. Catalyzes the 2-thiolation of uridine at the wobble position (U34) of tRNA, leading to the formation of s(2)U34. The polypeptide is tRNA-specific 2-thiouridylase MnmA (Bacillus cereus (strain ATCC 10987 / NRS 248)).